A 524-amino-acid chain; its full sequence is 2-isopropylmalate synthase (524 aa).

Residues 5–267 (VIIFDTTLRD…HTNIRHSEIH (263 aa)) enclose the Pyruvate carboxyltransferase domain. Mn(2+) contacts are provided by Asp14, His202, His204, and Asn238. Positions 392–524 (KLEYLGVQSG…KTDKINTESV (133 aa)) are regulatory domain.

Belongs to the alpha-IPM synthase/homocitrate synthase family. LeuA type 1 subfamily. In terms of assembly, homodimer. Mn(2+) is required as a cofactor.

Its subcellular location is the cytoplasm. It carries out the reaction 3-methyl-2-oxobutanoate + acetyl-CoA + H2O = (2S)-2-isopropylmalate + CoA + H(+). It functions in the pathway amino-acid biosynthesis; L-leucine biosynthesis; L-leucine from 3-methyl-2-oxobutanoate: step 1/4. Catalyzes the condensation of the acetyl group of acetyl-CoA with 3-methyl-2-oxobutanoate (2-ketoisovalerate) to form 3-carboxy-3-hydroxy-4-methylpentanoate (2-isopropylmalate). The polypeptide is 2-isopropylmalate synthase (Aeromonas hydrophila subsp. hydrophila (strain ATCC 7966 / DSM 30187 / BCRC 13018 / CCUG 14551 / JCM 1027 / KCTC 2358 / NCIMB 9240 / NCTC 8049)).